Consider the following 102-residue polypeptide: Acid shock protein (102 aa).

The N-terminal stretch at 1–21 is a signal peptide; that stretch reads MKKVLGLVVAAAMGLSSAAFA. The segment covering 22–41 has biased composition (low complexity); it reads AETATTPAPTATTTKAAPAK. The propeptide occupies 22–58; sequence AETATTPAPTATTTKAAPAKTTHHKKQHKAAPAQKAQ. Residues 22 to 102 are disordered; the sequence is AETATTPAPT…PAKPAAQPAA (81 aa). The segment covering 80–90 has biased composition (basic residues); that stretch reads AAKKHAGKHSH. Low complexity predominate over residues 91 to 102; sequence QQPAKPAAQPAA.

It belongs to the Asr family. Post-translationally, proteolytic processing gives rise to the active protein.

It localises to the periplasm. Functionally, required for growth and/or survival at acidic conditions. The sequence is that of Acid shock protein from Escherichia coli (strain SE11).